A 139-amino-acid polypeptide reads, in one-letter code: Small ribosomal subunit protein bS16 (139 aa).

The tract at residues 84 to 139 (KGEPAPAPLLQPAEKAARPSFEAIGGEDEGKGEAITQKKKADKRDEAAAESSASEA) is disordered.

The protein belongs to the bacterial ribosomal protein bS16 family.

The sequence is that of Small ribosomal subunit protein bS16 from Streptomyces lividans.